A 437-amino-acid polypeptide reads, in one-letter code: UDP-glucose 6-dehydrogenase (437 aa).

Residues valine 11, aspartate 30, lysine 35, threonine 86, threonine 122, and glutamate 155 each coordinate NAD(+). Substrate is bound by residues 151 to 155 (EFLRE), lysine 209, asparagine 213, 254 to 258 (FLHAG), and glycine 262. The active-site Nucleophile is cysteine 265. Lysine 268 is an NAD(+) binding site. Lysine 326 is a binding site for substrate. Arginine 333 contacts NAD(+).

The protein belongs to the UDP-glucose/GDP-mannose dehydrogenase family.

The enzyme catalyses UDP-alpha-D-glucose + 2 NAD(+) + H2O = UDP-alpha-D-glucuronate + 2 NADH + 3 H(+). It functions in the pathway nucleotide-sugar biosynthesis; UDP-alpha-D-glucuronate biosynthesis; UDP-alpha-D-glucuronate from UDP-alpha-D-glucose: step 1/1. Its pathway is capsule biogenesis; capsule polysaccharide biosynthesis. This is UDP-glucose 6-dehydrogenase from Rhizobium meliloti (strain 1021) (Ensifer meliloti).